Consider the following 191-residue polypeptide: Casparian strip membrane protein 4 (191 aa).

Over 1-27 the chain is Cytoplasmic; that stretch reads MKTGSVEAGEQASEDATPRRGKKLNRG. A helical transmembrane segment spans residues 28-48; the sequence is ILILDLVLRVFGAICTLGSAV. The Extracellular portion of the chain corresponds to 49 to 72; sequence AMGTTSQTLPSSSQFFRFRAKYND. A helical membrane pass occupies residues 73–93; it reads LPMFMFFAIANSIVCAYLVLS. The Cytoplasmic portion of the chain corresponds to 94 to 110; that stretch reads LRLSIFHIIRSAGIITR. The chain crosses the membrane as a helical span at residues 111–131; sequence IILVTFDMVMLVLLTCGASAA. The Extracellular portion of the chain corresponds to 132–160; it reads TSIVYLAHKGNASANWLPFCVRFSHFCNR. The N-linked (GlcNAc...) asparagine glycan is linked to Asn142. Residues 161 to 181 form a helical membrane-spanning segment; it reads ISGSLIGSFFSIIIFMLLVIL. At 182 to 191 the chain is on the cytoplasmic side; sequence SAVSQFSICN.

This sequence belongs to the Casparian strip membrane proteins (CASP) family. In terms of assembly, homodimer and heterodimers.

The protein localises to the cell membrane. Its function is as follows. Regulates membrane-cell wall junctions and localized cell wall deposition. Required for establishment of the Casparian strip membrane domain (CSD) and the subsequent formation of Casparian strips, a cell wall modification of the root endodermis that determines an apoplastic barrier between the intraorganismal apoplasm and the extraorganismal apoplasm and prevents lateral diffusion. The chain is Casparian strip membrane protein 4 from Ricinus communis (Castor bean).